The primary structure comprises 266 residues: Undecaprenyl-diphosphatase (266 aa).

8 helical membrane-spanning segments follow: residues 4-24 (ILSA…PISS), 39-59 (LSII…IIYY), 86-106 (LKLI…GTFI), 112-132 (MFTL…ILML), 145-165 (ILLA…PGIS), 182-202 (KSAF…AILL), 210-230 (IFMV…FVVG), and 246-266 (LYYF…FVRI).

Belongs to the UppP family.

The protein resides in the cell inner membrane. The enzyme catalyses di-trans,octa-cis-undecaprenyl diphosphate + H2O = di-trans,octa-cis-undecaprenyl phosphate + phosphate + H(+). Catalyzes the dephosphorylation of undecaprenyl diphosphate (UPP). Confers resistance to bacitracin. The sequence is that of Undecaprenyl-diphosphatase from Borreliella burgdorferi (strain ATCC 35210 / DSM 4680 / CIP 102532 / B31) (Borrelia burgdorferi).